A 232-amino-acid polypeptide reads, in one-letter code: U2 small nuclear ribonucleoprotein B'' (232 aa).

The RRM 1 domain occupies 10–89 (QTVYLRNLNE…KRMRVQYAKT (80 aa)). The tract at residues 90-159 (RSDCLATEDG…QEPPAPPNNI (70 aa)) is disordered. Basic and acidic residues predominate over residues 108–123 (KKQEEKAAEKKRRAEE). The segment covering 127 to 151 (SGPNAAAQSNGTGYQASRLGKTSQE) has biased composition (polar residues). Residues 158–232 (NILFIQNLPA…NPMAISYAKK (75 aa)) enclose the RRM 2 domain.

It belongs to the RRM U1 A/B'' family. Component of the spliceosome where it is associated with snRNP U2.

The protein resides in the nucleus. It is found in the cajal body. Its subcellular location is the nucleoplasm. It localises to the cytoplasm. Functionally, involved in nuclear pre-mRNA splicing. This Oryza sativa subsp. japonica (Rice) protein is U2 small nuclear ribonucleoprotein B''.